Reading from the N-terminus, the 559-residue chain is Formate--tetrahydrofolate ligase (559 aa).

68–75 (TPAGEGKT) provides a ligand contact to ATP.

Belongs to the formate--tetrahydrofolate ligase family.

It carries out the reaction (6S)-5,6,7,8-tetrahydrofolate + formate + ATP = (6R)-10-formyltetrahydrofolate + ADP + phosphate. It functions in the pathway one-carbon metabolism; tetrahydrofolate interconversion. This Rhizobium johnstonii (strain DSM 114642 / LMG 32736 / 3841) (Rhizobium leguminosarum bv. viciae) protein is Formate--tetrahydrofolate ligase.